We begin with the raw amino-acid sequence, 105 residues long: Large ribosomal subunit protein eL30 (105 aa).

The protein belongs to the eukaryotic ribosomal protein eL30 family.

The chain is Large ribosomal subunit protein eL30 (RPL30) from Trypanosoma brucei brucei.